A 144-amino-acid chain; its full sequence is 3-hydroxyacyl-[acyl-carrier-protein] dehydratase FabZ (144 aa).

His-48 is a catalytic residue.

The protein belongs to the thioester dehydratase family. FabZ subfamily.

The protein resides in the cytoplasm. It catalyses the reaction a (3R)-hydroxyacyl-[ACP] = a (2E)-enoyl-[ACP] + H2O. In terms of biological role, involved in unsaturated fatty acids biosynthesis. Catalyzes the dehydration of short chain beta-hydroxyacyl-ACPs and long chain saturated and unsaturated beta-hydroxyacyl-ACPs. This Listeria welshimeri serovar 6b (strain ATCC 35897 / DSM 20650 / CCUG 15529 / CIP 8149 / NCTC 11857 / SLCC 5334 / V8) protein is 3-hydroxyacyl-[acyl-carrier-protein] dehydratase FabZ.